A 368-amino-acid chain; its full sequence is Phospho-N-acetylmuramoyl-pentapeptide-transferase (368 aa).

9 consecutive transmembrane segments (helical) span residues 30–50 (AAAV…IKYL), 72–92 (LPTM…FLWA), 99–119 (VWLI…DDYM), 139–159 (VLLG…SVLL), 170–190 (LTID…TAVS), 201–221 (GLAS…AYLA), 238–258 (GGEI…FLWF), 264–286 (EIIM…ALLI), and 345–365 (KIVI…LMTL).

It belongs to the glycosyltransferase 4 family. MraY subfamily. Requires Mg(2+) as cofactor.

It localises to the cell inner membrane. The catalysed reaction is UDP-N-acetyl-alpha-D-muramoyl-L-alanyl-gamma-D-glutamyl-meso-2,6-diaminopimeloyl-D-alanyl-D-alanine + di-trans,octa-cis-undecaprenyl phosphate = di-trans,octa-cis-undecaprenyl diphospho-N-acetyl-alpha-D-muramoyl-L-alanyl-D-glutamyl-meso-2,6-diaminopimeloyl-D-alanyl-D-alanine + UMP. The protein operates within cell wall biogenesis; peptidoglycan biosynthesis. Catalyzes the initial step of the lipid cycle reactions in the biosynthesis of the cell wall peptidoglycan: transfers peptidoglycan precursor phospho-MurNAc-pentapeptide from UDP-MurNAc-pentapeptide onto the lipid carrier undecaprenyl phosphate, yielding undecaprenyl-pyrophosphoryl-MurNAc-pentapeptide, known as lipid I. This is Phospho-N-acetylmuramoyl-pentapeptide-transferase from Chlorobium limicola (strain DSM 245 / NBRC 103803 / 6330).